The following is a 273-amino-acid chain: HTH-type transcriptional regulator NimR (273 aa).

The 101-residue stretch at 158 to 258 (PKIRTMVEMM…GQTPGRYIAR (101 aa)) folds into the HTH araC/xylS-type domain. 2 consecutive DNA-binding regions (H-T-H motif) follow at residues 178–199 (GQWAGFFAMSERNLARLIVKET) and 225–248 (VQKVAHTLGYDSTTAFITMFKKGL).

Negatively regulates expression of the nimT operon and its own expression. Acts by binding to the nimR-nimT intergenic region. The protein is HTH-type transcriptional regulator NimR of Escherichia coli (strain K12).